Reading from the N-terminus, the 503-residue chain is Cytochrome P450 3A14 (503 aa).

Residue cysteine 442 coordinates heme.

The protein belongs to the cytochrome P450 family. Heme serves as cofactor.

It localises to the endoplasmic reticulum membrane. The protein localises to the microsome membrane. The catalysed reaction is an organic molecule + reduced [NADPH--hemoprotein reductase] + O2 = an alcohol + oxidized [NADPH--hemoprotein reductase] + H2O + H(+). Its function is as follows. Cytochromes P450 are a group of heme-thiolate monooxygenases. In liver microsomes, this enzyme is involved in an NADPH-dependent electron transport pathway. It oxidizes a variety of structurally unrelated compounds, including steroids, fatty acids, and xenobiotics. The protein is Cytochrome P450 3A14 (CYP3A14) of Cavia porcellus (Guinea pig).